The following is a 107-amino-acid chain: Toxin MT2730 (107 aa).

A disordered region spans residues 1–42; it reads MTHKRTKRQPAIAAGLNAPRRNRVGRQHGWPADVPSAEQRRA.

Toxic component of a type II toxin-antitoxin (TA) system. Its toxic effect is neutralized by coexpression with cognate antitoxin MT2731. The polypeptide is Toxin MT2730 (Mycobacterium tuberculosis (strain CDC 1551 / Oshkosh)).